We begin with the raw amino-acid sequence, 486 residues long: Bifunctional protein HldE (486 aa).

Positions 1–331 are ribokinase; the sequence is MSTNVADLLH…NALTAESVPV (331 aa). 207–210 contacts ATP; that stretch reads NLGE. The active site involves Asp-276. Residues 358 to 486 form a cytidylyltransferase region; the sequence is VTNGCFDLLH…STTKLIEKGH (129 aa).

It in the N-terminal section; belongs to the carbohydrate kinase PfkB family. In the C-terminal section; belongs to the cytidylyltransferase family. In terms of assembly, homodimer.

It carries out the reaction D-glycero-beta-D-manno-heptose 7-phosphate + ATP = D-glycero-beta-D-manno-heptose 1,7-bisphosphate + ADP + H(+). The enzyme catalyses D-glycero-beta-D-manno-heptose 1-phosphate + ATP + H(+) = ADP-D-glycero-beta-D-manno-heptose + diphosphate. Its pathway is nucleotide-sugar biosynthesis; ADP-L-glycero-beta-D-manno-heptose biosynthesis; ADP-L-glycero-beta-D-manno-heptose from D-glycero-beta-D-manno-heptose 7-phosphate: step 1/4. The protein operates within nucleotide-sugar biosynthesis; ADP-L-glycero-beta-D-manno-heptose biosynthesis; ADP-L-glycero-beta-D-manno-heptose from D-glycero-beta-D-manno-heptose 7-phosphate: step 3/4. Functionally, catalyzes the phosphorylation of D-glycero-D-manno-heptose 7-phosphate at the C-1 position to selectively form D-glycero-beta-D-manno-heptose-1,7-bisphosphate. Its function is as follows. Catalyzes the ADP transfer from ATP to D-glycero-beta-D-manno-heptose 1-phosphate, yielding ADP-D-glycero-beta-D-manno-heptose. The polypeptide is Bifunctional protein HldE (Koribacter versatilis (strain Ellin345)).